The sequence spans 180 residues: Shikimate kinase (180 aa).

Residue 14–19 (GAGKTC) coordinates ATP. Residue Thr18 coordinates Mg(2+). The substrate site is built by Asp36, Arg60, and Gly82. Arg120 is an ATP binding site. Arg139 serves as a coordination point for substrate.

This sequence belongs to the shikimate kinase family. In terms of assembly, monomer. Mg(2+) serves as cofactor.

Its subcellular location is the cytoplasm. The enzyme catalyses shikimate + ATP = 3-phosphoshikimate + ADP + H(+). It functions in the pathway metabolic intermediate biosynthesis; chorismate biosynthesis; chorismate from D-erythrose 4-phosphate and phosphoenolpyruvate: step 5/7. Its function is as follows. Catalyzes the specific phosphorylation of the 3-hydroxyl group of shikimic acid using ATP as a cosubstrate. The chain is Shikimate kinase from Stenotrophomonas maltophilia (strain R551-3).